Reading from the N-terminus, the 548-residue chain is Membrane protein insertase YidC (548 aa).

The next 5 helical transmembrane spans lie at 6–26 (NLIL…WESD), 349–369 (TVFQ…TLLV), 424–444 (LGGC…YWAL), 455–475 (FALW…PILM), and 503–523 (PIIF…YWLV).

The protein belongs to the OXA1/ALB3/YidC family. Type 1 subfamily. Interacts with the Sec translocase complex via SecD. Specifically interacts with transmembrane segments of nascent integral membrane proteins during membrane integration.

Its subcellular location is the cell inner membrane. Functionally, required for the insertion and/or proper folding and/or complex formation of integral membrane proteins into the membrane. Involved in integration of membrane proteins that insert both dependently and independently of the Sec translocase complex, as well as at least some lipoproteins. Aids folding of multispanning membrane proteins. In Aeromonas salmonicida (strain A449), this protein is Membrane protein insertase YidC.